A 529-amino-acid chain; its full sequence is Na(+)/H(+) antiporter NhaB (529 aa).

The next 12 helical transmembrane spans lie at 13 to 33 (FLGK…IINP), 34 to 54 (IVFF…EFIF), 90 to 110 (LVAN…IYFM), 113 to 133 (LLLF…ILSL), 149 to 166 (LTVI…YSIY), 205 to 225 (LLMH…VGEP), 241 to 261 (FLIR…LTCF), 306 to 326 (GLIA…VGLI), 327 to 347 (GLSV…HSLG), 351 to 371 (EEAL…AVII), 451 to 471 (ATPN…APLI), and 479 to 499 (VIMA…GIVF).

It belongs to the NhaB Na(+)/H(+) (TC 2.A.34) antiporter family.

The protein resides in the cell inner membrane. It carries out the reaction 2 Na(+)(in) + 3 H(+)(out) = 2 Na(+)(out) + 3 H(+)(in). Functionally, na(+)/H(+) antiporter that extrudes sodium in exchange for external protons. This is Na(+)/H(+) antiporter NhaB from Vibrio vulnificus (strain YJ016).